The following is a 510-amino-acid chain: Bifunctional pantoate ligase/cytidylate kinase (510 aa).

Positions M1 to V276 are pantoate--beta-alanine ligase. Residue M29–H36 participates in ATP binding. H36 functions as the Proton donor in the catalytic mechanism. Q61 lines the (R)-pantoate pocket. Q61 is a beta-alanine binding site. G150–D153 serves as a coordination point for ATP. Residue Q156 coordinates (R)-pantoate. L187–R190 is an ATP binding site. Residues F277 to K510 form a cytidylate kinase region.

It in the N-terminal section; belongs to the pantothenate synthetase family. The protein in the C-terminal section; belongs to the cytidylate kinase family. Type 1 subfamily.

It is found in the cytoplasm. It carries out the reaction (R)-pantoate + beta-alanine + ATP = (R)-pantothenate + AMP + diphosphate + H(+). The enzyme catalyses CMP + ATP = CDP + ADP. It catalyses the reaction dCMP + ATP = dCDP + ADP. It participates in cofactor biosynthesis; (R)-pantothenate biosynthesis; (R)-pantothenate from (R)-pantoate and beta-alanine: step 1/1. Catalyzes the condensation of pantoate with beta-alanine in an ATP-dependent reaction via a pantoyl-adenylate intermediate. Functionally, catalyzes the transfer of a phosphate group from ATP to either CMP or dCMP to form CDP or dCDP and ADP, respectively. This chain is Bifunctional pantoate ligase/cytidylate kinase, found in Prochlorococcus marinus (strain MIT 9215).